The following is a 199-amino-acid chain: Protein GrpE (199 aa).

Residues 1 to 24 are compositionally biased toward basic and acidic residues; sequence MSKQNKKDWKKFKDEHKEEHKVEN. A disordered region spans residues 1–47; the sequence is MSKQNKKDWKKFKDEHKEEHKVENEILEEEIDEKSQHQEPALGHPSY.

The protein belongs to the GrpE family. Homodimer.

It is found in the cytoplasm. In terms of biological role, participates actively in the response to hyperosmotic and heat shock by preventing the aggregation of stress-denatured proteins, in association with DnaK and GrpE. It is the nucleotide exchange factor for DnaK and may function as a thermosensor. Unfolded proteins bind initially to DnaJ; upon interaction with the DnaJ-bound protein, DnaK hydrolyzes its bound ATP, resulting in the formation of a stable complex. GrpE releases ADP from DnaK; ATP binding to DnaK triggers the release of the substrate protein, thus completing the reaction cycle. Several rounds of ATP-dependent interactions between DnaJ, DnaK and GrpE are required for fully efficient folding. This Legionella pneumophila (strain Paris) protein is Protein GrpE.